The following is a 649-amino-acid chain: 2-hydroxyacyl-CoA lyase 2 (649 aa).

A helical membrane pass occupies residues 2 to 21; that stretch reads FHLIPFVVAFLLVFLTWFLI. Residue Glu84 coordinates thiamine diphosphate. The tract at residues 474-554 is thiamine pyrophosphate binding; that stretch reads DFVGSAAYIL…AIGVIGNDAC (81 aa). Positions 525 and 551 each coordinate Mg(2+).

Belongs to the TPP enzyme family. Mg(2+) serves as cofactor. Thiamine diphosphate is required as a cofactor.

The protein localises to the endoplasmic reticulum membrane. The enzyme catalyses 2-hydroxyoctadecanoyl-CoA = heptadecanal + formyl-CoA. It catalyses the reaction (2R)-hydroxyhexadecanoyl-CoA = pentadecanal + formyl-CoA. Its function is as follows. Endoplasmic reticulum 2-OH acyl-CoA lyase involved in the cleavage (C1 removal) reaction in the fatty acid alpha-oxydation in a thiamine pyrophosphate (TPP)-dependent manner. Involved in the phytosphingosine degradation pathway. The polypeptide is 2-hydroxyacyl-CoA lyase 2 (ilvbl) (Xenopus laevis (African clawed frog)).